The sequence spans 771 residues: Metal transporter CNNM4 (771 aa).

Topologically, residues 1–175 (MAPGGGGGRR…LLFMVEEHGR (175 aa)) are extracellular. The N-linked (GlcNAc...) asparagine glycan is linked to Asn-119. Residues 175–355 (RFLPLWLHIL…EPYNDLVKEE (181 aa)) form the CNNM transmembrane domain. The helical transmembrane segment at 176–196 (FLPLWLHILLVMVLLVLSGIF) threads the bilayer. The Cytoplasmic segment spans residues 197–237 (SGLNLGLMALDPMELRIVQNCGTEKERKYARKIEPIRRKGN). The helical intramembrane region spans 238–258 (YLLCSLLLGNVLVNTSLTILL). Residues 259–261 (DNL) lie on the Cytoplasmic side of the membrane. Residues 262 to 282 (IGSGIMAVASSTIGIVIFGEI) traverse the membrane as a helical segment. The Extracellular portion of the chain corresponds to 283-290 (LPQALCSR). Residues 291-313 (HGLAVGANTIVLTKVFMLLTFPL) form a helical membrane-spanning segment. The Cytoplasmic portion of the chain corresponds to 314–771 (SFPISKLLDF…LHRASEEETI (458 aa)). CBS domains lie at 374–435 (MTQL…CTPL) and 442–508 (YNHP…ILDE). Phosphoserine is present on residues Ser-657, Ser-661, and Ser-766.

Belongs to the ACDP family. As to quaternary structure, interacts with COX11. As to expression, cornea, retina, teeth (at protein level). In the retina it is predominantly localized to the outer plexiform layer, inner plexiform layer and ganglion cell layer. In the tooth strongest expression is observed in the cell body of the ameloblasts. Expressed at high levels in the gastrointestinal tract and testis.

The protein localises to the cell membrane. Probable metal transporter. The interaction with the metal ion chaperone COX11 suggests that it may play a role in sensory neuron functions. May play a role in biomineralization and retinal function. In Mus musculus (Mouse), this protein is Metal transporter CNNM4 (Cnnm4).